We begin with the raw amino-acid sequence, 309 residues long: Mannitol-1-phosphatase (309 aa).

Histidine 82 serves as the catalytic Tele-phosphohistidine intermediate. Residue glutamate 166 is the Proton donor/acceptor of the active site.

Belongs to the phosphoglycerate mutase family.

The enzyme catalyses D-mannitol 1-phosphate + H2O = D-mannitol + phosphate. Its activity is regulated as follows. By diethyl pyrocarbonate (DEPC). In terms of biological role, key enzyme for mannitol biosynthesis. The sequence is that of Mannitol-1-phosphatase from Eimeria tenella (Coccidian parasite).